We begin with the raw amino-acid sequence, 521 residues long: Lysine--tRNA ligase (521 aa).

The short motif at Pro-32 to Asn-40 is the 'HIGH' region element. The 'KMSKS' region motif lies at Lys-280–Ser-284.

Belongs to the class-I aminoacyl-tRNA synthetase family.

It is found in the cytoplasm. The enzyme catalyses tRNA(Lys) + L-lysine + ATP = L-lysyl-tRNA(Lys) + AMP + diphosphate. In Borreliella burgdorferi (strain ATCC 35210 / DSM 4680 / CIP 102532 / B31) (Borrelia burgdorferi), this protein is Lysine--tRNA ligase (lysS).